Here is a 198-residue protein sequence, read N- to C-terminus: Density-regulated protein (198 aa).

The residue at position 2 (A2) is an N-acetylalanine. S20 and S73 each carry phosphoserine. Residues 72–110 (NSPKQEAGISEGQGTAGEEEEKKKQKRGGRGQIKQKKKT) are disordered. T86 carries the phosphothreonine modification. A compositionally biased stretch (basic residues) spans 95 to 110 (KQKRGGRGQIKQKKKT). The SUI1 domain maps to 115–182 (VTIAKIPRAK…DIIDVIQEKW (68 aa)). Position 189 is a phosphoserine (S189).

The protein belongs to the DENR family. In terms of assembly, interacts with MCTS1 (via PUA domain); the complex regulates translation reinitiation. As to expression, highly expressed in heart and skeletal muscle and moderately expressed in the brain, placenta, liver and pancreas. Weakly expressed in the lung and kidney.

The protein resides in the cytoplasm. In terms of biological role, translation regulator forming a complex with MCTS1 to promote translation reinitiation. Translation reinitiation is the process where the small ribosomal subunit remains attached to the mRNA following termination of translation of a regulatory upstream ORF (uORF), and resume scanning on the same mRNA molecule to initiate translation of a downstream ORF, usually the main ORF (mORF). The MCTS1/DENR complex is pivotal to two linked mechanisms essential for translation reinitiation. Firstly, the dissociation of deacylated tRNAs from post-termination 40S ribosomal complexes during ribosome recycling. Secondly, the recruitment in an EIF2-independent manner of aminoacylated initiator tRNA to P site of 40S ribosomes for a new round of translation. This regulatory mechanism governs the translation of more than 150 genes which translation reinitiation is MCTS1/DENR complex-dependent. In Homo sapiens (Human), this protein is Density-regulated protein (DENR).